We begin with the raw amino-acid sequence, 349 residues long: Ethyl acetate hydrolase (349 aa).

Positions 67-300 (YIGEGRALDP…SHDQFFTVDD (234 aa)) constitute an AB hydrolase-1 domain. Ser-139 acts as the Nucleophile in catalysis. Residues Asp-293 and His-322 contribute to the active site.

This sequence belongs to the AB hydrolase superfamily. Acetyl esterase family. In terms of assembly, homodimer.

It carries out the reaction ethyl acetate + H2O = ethanol + acetate + H(+). Functionally, esterase that catalyzes the hydrolysis of ethyl acetate. Involved in the degradation of short chain methyl ketones (MEK) such as 2-butanone and 2-hexanone. In vitro, can also hydrolyze vinyl acetate, 4-nitrophenyl acetate, methyl acetate, propyl acetate, benzyl acetate and methyl propionate. The highest activities are obtained with acetic acid esters, but the alcohol group also plays an important role, as compounds with two carbon atoms in the alcohol moiety, i.e., vinyl and ethyl acetate, are by far the preferred substrates. This is Ethyl acetate hydrolase from Pseudomonas veronii.